The following is a 279-amino-acid chain: DegV domain-containing protein CPE1310 (279 aa).

In terms of domain architecture, DegV spans I4–E277. 2 residues coordinate hexadecanoate: T62 and S94.

Functionally, may bind long-chain fatty acids, such as palmitate, and may play a role in lipid transport or fatty acid metabolism. In Clostridium perfringens (strain 13 / Type A), this protein is DegV domain-containing protein CPE1310.